A 203-amino-acid chain; its full sequence is Putative phosphoserine phosphatase 2 (203 aa).

The active-site Tele-phosphohistidine intermediate is the His9. His149 is a catalytic residue.

It belongs to the histidine phosphatase superfamily. Metal-independent phosphoserine phosphatase family. In terms of assembly, heterodimer with PspA. The PspB subunit appears to have no or considerably lower PSP activity compared with that of PspA.

It carries out the reaction O-phospho-L-serine + H2O = L-serine + phosphate. It catalyses the reaction O-phospho-D-serine + H2O = D-serine + phosphate. It participates in amino-acid biosynthesis; L-serine biosynthesis; L-serine from 3-phospho-D-glycerate: step 3/3. With respect to regulation, activity is not inhibited by EDTA in vitro, nor enhanced by the addition of Mg(2+). In terms of biological role, part of a complex that catalyzes the dephosphorylation of L-phosphoserine to serine and inorganic phosphate. Is poorly or not active toward D-phosphoserine, DL-phosphothreonine, 3-phosphoglycerate, para-nitrophenylphosphate, and fructose-6-phosphate. Does not display phosphoglycerate mutase activity. This is Putative phosphoserine phosphatase 2 (pspB) from Hydrogenobacter thermophilus (strain DSM 6534 / IAM 12695 / TK-6).